We begin with the raw amino-acid sequence, 137 residues long: Protein archease (137 aa).

3 residues coordinate Ca(2+): Asp-11, Asp-136, and Ile-137.

Belongs to the archease family.

Functionally, activates the tRNA-splicing ligase complex by facilitating the enzymatic turnover of catalytic subunit RtcB. Acts by promoting the guanylylation of RtcB, a key intermediate step in tRNA ligation. Can also alter the NTP specificity of RtcB such that ATP, dGTP or ITP is used efficiently. The polypeptide is Protein archease (Archaeoglobus fulgidus (strain ATCC 49558 / DSM 4304 / JCM 9628 / NBRC 100126 / VC-16)).